Reading from the N-terminus, the 418-residue chain is Tyrosine--tRNA ligase 1 (418 aa).

Tyr34 is a binding site for L-tyrosine. The 'HIGH' region signature appears at 39–48 (PTADSLHLGH). Positions 169 and 173 each coordinate L-tyrosine. The 'KMSKS' region signature appears at 229–233 (KFGKS). Lys232 is an ATP binding site. Positions 352 to 418 (LNIVELLVNA…GKKKNFVLTY (67 aa)) constitute an S4 RNA-binding domain.

This sequence belongs to the class-I aminoacyl-tRNA synthetase family. TyrS type 1 subfamily. As to quaternary structure, homodimer.

The protein localises to the cytoplasm. The enzyme catalyses tRNA(Tyr) + L-tyrosine + ATP = L-tyrosyl-tRNA(Tyr) + AMP + diphosphate + H(+). Catalyzes the attachment of tyrosine to tRNA(Tyr) in a two-step reaction: tyrosine is first activated by ATP to form Tyr-AMP and then transferred to the acceptor end of tRNA(Tyr). The chain is Tyrosine--tRNA ligase 1 from Streptococcus thermophilus (strain CNRZ 1066).